We begin with the raw amino-acid sequence, 129 residues long: uncharacterized protein (129 aa).

The first 24 residues, 1-24, serve as a signal peptide directing secretion; sequence MAFGWHSMHGSIIWFLQIAQLSTA. The next 2 helical transmembrane spans lie at 38-58 and 95-115; these read ISNLFFLVSTGALWFELCAIF and IAHIEAHTSIVGFMISLFTPL.

It localises to the membrane. This is an uncharacterized protein from Saccharomyces cerevisiae (strain ATCC 204508 / S288c) (Baker's yeast).